Consider the following 139-residue polypeptide: Transmembrane protein 250 (139 aa).

2 helical membrane-spanning segments follow: residues 56–76 and 116–136; these read FLLY…LAAL and VYGI…FMVF.

In terms of assembly, (Microbial infection) Interacts with herpes simplex virus 1/HHV-1 protein CVC2/UL25.

The protein localises to the membrane. Its subcellular location is the nucleus. It is found in the cytoplasm. Its function is as follows. May play a role in cell proliferation by promoting progression into S phase. Functionally, (Microbial infection) Promotes human herpes simplex virus 1/HHV-1 proliferation. The polypeptide is Transmembrane protein 250 (Homo sapiens (Human)).